A 199-amino-acid chain; its full sequence is Fe/S biogenesis protein NfuA (199 aa).

Positions 151 and 154 each coordinate [4Fe-4S] cluster.

This sequence belongs to the NfuA family. In terms of assembly, homodimer. Requires [4Fe-4S] cluster as cofactor.

Functionally, involved in iron-sulfur cluster biogenesis. Binds a 4Fe-4S cluster, can transfer this cluster to apoproteins, and thereby intervenes in the maturation of Fe/S proteins. Could also act as a scaffold/chaperone for damaged Fe/S proteins. The protein is Fe/S biogenesis protein NfuA of Stenotrophomonas maltophilia (strain R551-3).